The sequence spans 851 residues: DNA mismatch repair protein MutS (851 aa).

Position 614 to 621 (Gly-614 to Ser-621) interacts with ATP.

This sequence belongs to the DNA mismatch repair MutS family.

Its function is as follows. This protein is involved in the repair of mismatches in DNA. It is possible that it carries out the mismatch recognition step. This protein has a weak ATPase activity. The sequence is that of DNA mismatch repair protein MutS from Yersinia pestis.